Reading from the N-terminus, the 211-residue chain is tRNA (guanine-N(7)-)-methyltransferase (211 aa).

Residues Glu-44, Asp-69, Asp-96, and Asp-118 each contribute to the S-adenosyl-L-methionine site. The active site involves Asp-118. Lys-122 provides a ligand contact to substrate. Residues 124 to 129 (RHEKRR) form an interaction with RNA region. Residues Asp-154 and 191–194 (TEYE) each bind substrate.

The protein belongs to the class I-like SAM-binding methyltransferase superfamily. TrmB family.

It catalyses the reaction guanosine(46) in tRNA + S-adenosyl-L-methionine = N(7)-methylguanosine(46) in tRNA + S-adenosyl-L-homocysteine. It functions in the pathway tRNA modification; N(7)-methylguanine-tRNA biosynthesis. Functionally, catalyzes the formation of N(7)-methylguanine at position 46 (m7G46) in tRNA. In Streptococcus equi subsp. zooepidemicus (strain H70), this protein is tRNA (guanine-N(7)-)-methyltransferase.